The sequence spans 525 residues: MNKSVIGTKQMVVSPHYLASQAGNRILDKGGNAFDAAVAVSACLAVVYPHMTGLGGDSFWLTFHQETKAVKVYNGSGRSGKNVTRDVYKGKSAIPLRGIDSAITVPGMVDSWDAVLKEYGRLSLADVLEPARDYAQNGFPVSADQCRHTEKNIELLASTPYTADIFTRRGKAPVPGERFVQKELADSLNLIAEKGRSAFYEGDLAQRIVSHLQNNGSYMTIDDFKAHRGEWAAPVSSDYRGYSVYQAPPNSQGFTGLLTLNILENYDFTQIEHGSFEYYHVLVEALKKSFLDRDAVLTDPAFADIPLERLLDKRYAKQLAEEIGYLAIPAESRPVGSDTAYAAVIDADGNAVSFIQSLYFEFGSAVTAGDTGILLQNRGSFFSLDENHVNTLEPRKRTFHTLMPAMVCKGGKPKILYGTQGGEGQPQTQTAIITRMLDYGMHPQQAISEPRWVWGRTWGEEYEGLRVEGRFTDKTIQKLKDSGHLVEVVGDYDPLMGQAAAIKVDEEGFLQGGADPRGDGAAVGI.

Catalysis depends on T339, which acts as the Nucleophile.

It belongs to the gamma-glutamyltransferase family. As to quaternary structure, this enzyme consists of two polypeptide chains, which are synthesized from a single polypeptide. Post-translationally, cleaved by autocatalysis into a large and a small subunit.

The catalysed reaction is an N-terminal (5-L-glutamyl)-[peptide] + an alpha-amino acid = 5-L-glutamyl amino acid + an N-terminal L-alpha-aminoacyl-[peptide]. The enzyme catalyses glutathione + H2O = L-cysteinylglycine + L-glutamate. It carries out the reaction an S-substituted glutathione + H2O = an S-substituted L-cysteinylglycine + L-glutamate. Functionally, overexpressed protein with an N-terminal His tag has been reported not to hydrolyze glutathione; it is not clear if the construct is processed to 2 subunits. The polypeptide is Glutathione hydrolase-like YwrD proenzyme (ywrD) (Bacillus subtilis (strain 168)).